Consider the following 167-residue polypeptide: Putative peroxiredoxin-B (167 aa).

A Thioredoxin domain is found at 4–167 (IKRGDRFPTT…STAQKIIAKL (164 aa)). The active-site Cysteine sulfenic acid (-SOH) intermediate is Cys53. Residues 165–167 (AKL) carry the Microbody targeting signal motif.

Belongs to the peroxiredoxin family. Prx5 subfamily.

The protein resides in the peroxisome membrane. The catalysed reaction is a hydroperoxide + [thioredoxin]-dithiol = an alcohol + [thioredoxin]-disulfide + H2O. In terms of biological role, thiol-specific peroxidase that catalyzes the reduction of hydrogen peroxide and organic hydroperoxides to water and alcohols, respectively. Plays a role in cell protection against oxidative stress by detoxifying peroxides and as sensor of hydrogen peroxide-mediated signaling events. The chain is Putative peroxiredoxin-B (PMPB) from Candida boidinii (Yeast).